The sequence spans 273 residues: Glutamate racemase (273 aa).

Substrate is bound by residues D19–S20 and Y51–G52. C83 functions as the Proton donor/acceptor in the catalytic mechanism. N84–T85 serves as a coordination point for substrate. C198 acts as the Proton donor/acceptor in catalysis. T199–H200 contributes to the substrate binding site.

It belongs to the aspartate/glutamate racemases family.

The catalysed reaction is L-glutamate = D-glutamate. Its pathway is cell wall biogenesis; peptidoglycan biosynthesis. Provides the (R)-glutamate required for cell wall biosynthesis. The chain is Glutamate racemase from Agrobacterium fabrum (strain C58 / ATCC 33970) (Agrobacterium tumefaciens (strain C58)).